We begin with the raw amino-acid sequence, 292 residues long: G1/S-specific cyclin-D3 (292 aa).

Positions 27-152 (VLQSLLRLEE…LVLGKLKWDL (126 aa)) constitute a Cyclin N-terminal domain. Residues 254–292 (SLREASQTSSSPAPKAPRGSSSQGPSQTSTPTDVTAIHL) are disordered. Phosphoserine occurs at positions 264 and 279. Low complexity predominate over residues 272-285 (GSSSQGPSQTSTPT). A Phosphothreonine modification is found at threonine 283.

It belongs to the cyclin family. Cyclin D subfamily. In terms of assembly, interacts with the CDK4 and CDK6 protein kinases to form a serine/threonine kinase holoenzyme complex. The cyclin subunit imparts substrate specificity to the complex. Interacts with ATF5. Interacts with EIF3K. Component of the ternary complex cyclin D/CDK4/CDKN1B required for nuclear translocation and modulation of CDK4-mediated kinase activity. Can form similar complexes with either CDKN1A or CDKN2A. In terms of processing, phosphorylation at Thr-283 by MAP kinases is required for ubiquitination and degradation by the DCX(AMBRA1) complex. Post-translationally, ubiquitinated by the DCX(AMBRA1) complex during the transition from G1 to S cell phase, leading to its degradation: ubiquitination is dependent on Thr-283 phosphorylation. The DCX(AMBRA1) complex represents the major regulator of CCND3 stability during the G1/S transition. Polyubiquitinated by the SCF(FBXL2) complex, leading to proteasomal degradation.

Its subcellular location is the nucleus. The protein resides in the cytoplasm. In terms of biological role, regulatory component of the cyclin D3-CDK4 (DC) complex that phosphorylates and inhibits members of the retinoblastoma (RB) protein family including RB1 and regulates the cell-cycle during G(1)/S transition. Phosphorylation of RB1 allows dissociation of the transcription factor E2F from the RB/E2F complex and the subsequent transcription of E2F target genes which are responsible for the progression through the G(1) phase. Hypophosphorylates RB1 in early G(1) phase. Cyclin D-CDK4 complexes are major integrators of various mitogenenic and antimitogenic signals. Component of the ternary complex, cyclin D3/CDK4/CDKN1B, required for nuclear translocation and activity of the cyclin D-CDK4 complex. Shows transcriptional coactivator activity with ATF5 independently of CDK4. The sequence is that of G1/S-specific cyclin-D3 from Homo sapiens (Human).